The chain runs to 160 residues: 6,7-dimethyl-8-ribityllumazine synthase (160 aa).

5-amino-6-(D-ribitylamino)uracil-binding positions include phenylalanine 32, 66-68, and 90-92; these read ALE and CII. 95–96 is a (2S)-2-hydroxy-3-oxobutyl phosphate binding site; sequence ET. Residue histidine 98 is the Proton donor of the active site. Asparagine 123 contacts 5-amino-6-(D-ribitylamino)uracil. A (2S)-2-hydroxy-3-oxobutyl phosphate-binding site is contributed by arginine 137.

Belongs to the DMRL synthase family.

It catalyses the reaction (2S)-2-hydroxy-3-oxobutyl phosphate + 5-amino-6-(D-ribitylamino)uracil = 6,7-dimethyl-8-(1-D-ribityl)lumazine + phosphate + 2 H2O + H(+). It participates in cofactor biosynthesis; riboflavin biosynthesis; riboflavin from 2-hydroxy-3-oxobutyl phosphate and 5-amino-6-(D-ribitylamino)uracil: step 1/2. Catalyzes the formation of 6,7-dimethyl-8-ribityllumazine by condensation of 5-amino-6-(D-ribitylamino)uracil with 3,4-dihydroxy-2-butanone 4-phosphate. This is the penultimate step in the biosynthesis of riboflavin. This is 6,7-dimethyl-8-ribityllumazine synthase from Methylibium petroleiphilum (strain ATCC BAA-1232 / LMG 22953 / PM1).